A 101-amino-acid polypeptide reads, in one-letter code: Large ribosomal subunit protein uL24 (101 aa).

The protein belongs to the universal ribosomal protein uL24 family. Part of the 50S ribosomal subunit.

One of two assembly initiator proteins, it binds directly to the 5'-end of the 23S rRNA, where it nucleates assembly of the 50S subunit. In terms of biological role, one of the proteins that surrounds the polypeptide exit tunnel on the outside of the subunit. This Ruegeria sp. (strain TM1040) (Silicibacter sp.) protein is Large ribosomal subunit protein uL24.